The chain runs to 760 residues: Histone-lysine N-methyltransferase EZH2 (760 aa).

2 disordered regions span residues 208-231 (KDDAEDHKEQLSSESHNNDGSKKF) and 356-444 (PERA…PENV). The span at 361 to 373 (TPSKRSTGRRRGR) shows a compositional bias: basic residues. Residues 375–388 (PNSNSRPSTPTVNS) are compositionally biased toward polar residues. The segment covering 389–400 (ETKDTDSDREGG) has biased composition (basic and acidic residues). The CXC domain occupies 517–619 (CRKIQLKKDG…SKNVSCKNCS (103 aa)). Residues 626–741 (KHLLLAPSDV…TGEELFFDYR (116 aa)) enclose the SET domain.

The protein belongs to the class V-like SAM-binding methyltransferase superfamily. Histone-lysine methyltransferase family. EZ subfamily. Component of the prc2/eed-ezh2 complex.

The protein resides in the nucleus. The catalysed reaction is L-lysyl(27)-[histone H3] + 3 S-adenosyl-L-methionine = N(6),N(6),N(6)-trimethyl-L-lysyl(27)-[histone H3] + 3 S-adenosyl-L-homocysteine + 3 H(+). Functionally, polycomb group (PcG) protein. Catalytic subunit of the prc2/eed-ezh2 complex, which methylates 'Lys-9' and 'Lys-27' of histone H3, leading to transcriptional repression of the affected target gene. May regulate the circadian clock via histone methylation at the promoter of the circadian genes. This chain is Histone-lysine N-methyltransferase EZH2 (ezh2), found in Danio rerio (Zebrafish).